The following is a 397-amino-acid chain: Monooxygenase 1 (397 aa).

It belongs to the 3-hydroxybenzoate 6-hydroxylase family. In terms of assembly, monomer. The cofactor is FAD. Expressed in seedlings, roots, leaves, flowers and siliques.

In Arabidopsis thaliana (Mouse-ear cress), this protein is Monooxygenase 1.